Here is a 247-residue protein sequence, read N- to C-terminus: DNA polymerase sliding clamp (247 aa).

The protein belongs to the PCNA family. As to quaternary structure, homotrimer. The subunits circularize to form a toroid; DNA passes through its center. Replication factor C (RFC) is required to load the toroid on the DNA.

Sliding clamp subunit that acts as a moving platform for DNA processing. Responsible for tethering the catalytic subunit of DNA polymerase and other proteins to DNA during high-speed replication. This is DNA polymerase sliding clamp from Methanosphaerula palustris (strain ATCC BAA-1556 / DSM 19958 / E1-9c).